We begin with the raw amino-acid sequence, 24 residues long: Hyaluronidase (24 aa).

As to expression, expressed by the venom gland.

The protein resides in the secreted. The enzyme catalyses Random hydrolysis of (1-&gt;4)-linkages between N-acetyl-beta-D-glucosamine and D-glucuronate residues in hyaluronate.. In terms of biological role, possesses high activity against hyaluronan in vitro. This is Hyaluronidase from Tityus stigmurus (Brazilian scorpion).